The primary structure comprises 116 residues: Protein aq_1857 (116 aa).

The protein belongs to the HesB/IscA family.

This chain is Protein aq_1857, found in Aquifex aeolicus (strain VF5).